We begin with the raw amino-acid sequence, 447 residues long: Phosphoglucosamine mutase (447 aa).

Ser-104 serves as the catalytic Phosphoserine intermediate. The Mg(2+) site is built by Ser-104, Asp-243, Asp-245, and Asp-247. At Ser-104 the chain carries Phosphoserine.

It belongs to the phosphohexose mutase family. Requires Mg(2+) as cofactor. Activated by phosphorylation.

It catalyses the reaction alpha-D-glucosamine 1-phosphate = D-glucosamine 6-phosphate. Catalyzes the conversion of glucosamine-6-phosphate to glucosamine-1-phosphate. This is Phosphoglucosamine mutase from Corynebacterium diphtheriae (strain ATCC 700971 / NCTC 13129 / Biotype gravis).